Consider the following 883-residue polypeptide: UTP--glucose-1-phosphate uridylyltransferase 3, chloroplastic (883 aa).

The transit peptide at 1–72 (MANPQASPIL…HQVRHVSTVP (72 aa)) directs the protein to the chloroplast.

This sequence belongs to the UDPGP type 1 family. Mg(2+) serves as cofactor.

It is found in the plastid. It localises to the chloroplast. The enzyme catalyses alpha-D-glucose 1-phosphate + UTP + H(+) = UDP-alpha-D-glucose + diphosphate. With respect to regulation, inhibited by pyrophosphate. In terms of biological role, involved in the biosynthesis of sulfolipids in the chloroplast. Catalyzes the first committed step in sulfolipid biosynthesis. Converts glucose 1-phosphate to UDP-glucose, the precursor of the polar head of sulfolipid. In addition to glucose 1-phosphate, can use galactose 1-phosphate, but with much lower activity. No uridyltransferase activity with other hexose monophosphates. Specific for UTP and cannot use ATP, CTP, and GTP. This is UTP--glucose-1-phosphate uridylyltransferase 3, chloroplastic from Arabidopsis thaliana (Mouse-ear cress).